Consider the following 322-residue polypeptide: Retinal homeobox protein Rx-A (322 aa).

The short motif at H32 to G39 is the Octapeptide motif element. Basic and acidic residues predominate over residues T75–D87. The interval T75 to T136 is disordered. Over residues K100 to N117 the composition is skewed to polar residues. Positions H130–E189 form a DNA-binding region, homeobox. Residues N302–I315 carry the OAR motif. The Nuclear localization signal signature appears at R308–K312.

This sequence belongs to the paired homeobox family. Bicoid subfamily. In terms of tissue distribution, highly expressed in anterior neural plate followed by neural retina, pigmented epithelium, in pineal gland, diencephalon floor and epiphysis. At later stages, the neuroretina remains the primary site of expression. No expression in the developing lens and cornea.

Its subcellular location is the nucleus. Its function is as follows. Plays a critical role in eye formation by regulating the initial specification of retinal cells and/or their subsequent proliferation. The chain is Retinal homeobox protein Rx-A (rax-a) from Xenopus laevis (African clawed frog).